The sequence spans 360 residues: E3 ubiquitin-protein ligase RNF146 (360 aa).

Residues 37-75 form an RING-type zinc finger; the sequence is CAICLQTCVHPVSLPCKHVFCYLCVKGASWLGKRCALCR. Residues Lys-85 and Lys-95 each participate in a glycyl lysine isopeptide (Lys-Gly) (interchain with G-Cter in ubiquitin) cross-link. Residues 92–168 form the WWE domain; the sequence is EELKAASRGN…EHGRRRKIKR (77 aa). A glycoprotein-binding residues include Tyr-108, Arg-111, and Trp-115. Lys-131 is covalently cross-linked (Glycyl lysine isopeptide (Lys-Gly) (interchain with G-Cter in ubiquitin)). Positions 145, 154, 164, and 176 each coordinate a glycoprotein. Lys-176 is covalently cross-linked (Glycyl lysine isopeptide (Lys-Gly) (interchain with G-Cter in ubiquitin)). Positions 259–360 are disordered; the sequence is ERSHRGEGEE…PDGQCTVTEV (102 aa). The span at 284–294 shows a compositional bias: acidic residues; that stretch reads SIEETESDASS. Ser-290 and Ser-294 each carry phosphoserine. Over residues 295–305 the composition is skewed to low complexity; the sequence is DSENVSSAVVA. Over residues 307–333 the composition is skewed to polar residues; that stretch reads HSLTQQRLLVSNANQTVSDRSDQSGTD.

In terms of assembly, can form homooligomers. Interacts with PARsylated AXIN1, AXIN2, BLZF1, CASC3, H1-2, IPO7, LIG3, NCL, PARP1, XRCC1, XRCC5 and XRCC6. Interacts with DDB1, DHX15, IQGAP1, LRPPRC, PARP2, PRKDC, RUVBL2, TNKS1 and TNKS2. Binding often leads to interactor ubiquitination, in the presence of the appropriate E1 and E2 enzymes, and proteasomal degradation. Ubiquitinated; autoubiquitinated. Autoubiquitination is enhanced upon poly(ADP-ribose)-binding.

The protein resides in the cytoplasm. Its subcellular location is the cytosol. It localises to the nucleus. The catalysed reaction is S-ubiquitinyl-[E2 ubiquitin-conjugating enzyme]-L-cysteine + [acceptor protein]-L-lysine = [E2 ubiquitin-conjugating enzyme]-L-cysteine + N(6)-ubiquitinyl-[acceptor protein]-L-lysine.. It participates in protein modification; protein ubiquitination. Its function is as follows. E3 ubiquitin-protein ligase that specifically binds poly-ADP-ribosylated (PARsylated) proteins and mediates their ubiquitination and subsequent degradation. May regulate many important biological processes, such as cell survival and DNA damage response. Acts as an activator of the Wnt signaling pathway by mediating the ubiquitination of PARsylated AXIN1 and AXIN2, 2 key components of the beta-catenin destruction complex. Acts in cooperation with tankyrase proteins (TNKS and TNKS2), which mediate PARsylation of target proteins AXIN1, AXIN2, BLZF1, CASC3, TNKS and TNKS2. Recognizes and binds tankyrase-dependent PARsylated proteins via its WWE domain and mediates their ubiquitination, leading to their degradation. Different ubiquitin linkage types have been observed: TNKS2 undergoes ubiquitination at 'Lys-48' and 'Lys-63', while AXIN1 is only ubiquitinated at 'Lys-48'. May regulate TNKS and TNKS2 subcellular location, preventing aggregation at a centrosomal location. Neuroprotective protein. Protects the brain against N-methyl-D-aspartate (NMDA) receptor-mediated glutamate excitotoxicity and ischemia, by interfering with PAR-induced cell death, called parthanatos. Prevents nuclear translocation of AIFM1 in a PAR-binding dependent manner. Does not affect PARP1 activation. Protects against cell death induced by DNA damaging agents, such as N-methyl-N-nitro-N-nitrosoguanidine (MNNG) and rescues cells from G1 arrest. Promotes cell survival after gamma-irradiation. Facilitates DNA repair. This is E3 ubiquitin-protein ligase RNF146 (RNF146) from Macaca fascicularis (Crab-eating macaque).